Reading from the N-terminus, the 635-residue chain is Threonine--tRNA ligase (635 aa).

Residues 1 to 144 are editing domain; sequence MQLLLIHSDY…RTIRLEGAVP (144 aa). The catalytic stretch occupies residues 215–514; it reads PHVELMRRLE…AEEGKVPNLP (300 aa). Positions 307, 359, and 483 each coordinate Zn(2+).

The protein belongs to the class-II aminoacyl-tRNA synthetase family. In terms of assembly, homodimer. It depends on Zn(2+) as a cofactor.

It is found in the cytoplasm. The enzyme catalyses tRNA(Thr) + L-threonine + ATP = L-threonyl-tRNA(Thr) + AMP + diphosphate + H(+). Functionally, catalyzes the attachment of threonine to tRNA(Thr) in a two-step reaction: L-threonine is first activated by ATP to form Thr-AMP and then transferred to the acceptor end of tRNA(Thr). Also edits incorrectly charged L-seryl-tRNA(Thr). This Methanococcoides burtonii (strain DSM 6242 / NBRC 107633 / OCM 468 / ACE-M) protein is Threonine--tRNA ligase.